The primary structure comprises 508 residues: Octopamine receptor beta-1R (508 aa).

The Extracellular portion of the chain corresponds to 1-111; the sequence is MTLLQRLQAM…SHLALVFVKC (111 aa). Residues 112–132 traverse the membrane as a helical segment; sequence FIIGFIILAAILGNMLVIVSV. Topologically, residues 133 to 139 are cytoplasmic; it reads MRHRKLR. Residues 140–160 form a helical membrane-spanning segment; it reads IITNYFVVSLAVADMLVALCA. The Extracellular portion of the chain corresponds to 161–186; the sequence is MTFNASVMISGKWMFGSVMCDMWNSF. N-linked (GlcNAc...) asparagine glycosylation is present at asparagine 164. The helical transmembrane segment at 187–209 threads the bilayer; it reads DVYFSTASIMHLCCISVDRYYAI. Residues 210-223 lie on the Cytoplasmic side of the membrane; it reads VQPLDYPLIMTQRR. The chain crosses the membrane as a helical span at residues 224-244; it reads VFIMLLMVWLSPALLSFLPIC. The Extracellular segment spans residues 245-270; it reads SGWYTTTENYKYLKSNPHICEFKVNK. The chain crosses the membrane as a helical span at residues 271 to 291; it reads AYAIVSSSMSFWIPGIVMLSM. At 292–351 the chain is on the cytoplasmic side; it reads YYRIYQEADRQERLVYRSKVAALLLEKHLQISQIPKPRPSIQVEQSTISTMRRERKAART. Residues 352–372 traverse the membrane as a helical segment; it reads LGIIMSAFLICWLPFFLWYIV. Residues 373-383 lie on the Extracellular side of the membrane; sequence SSLCDSCITPR. A helical transmembrane segment spans residues 384 to 404; sequence LLVGILFWIGYFNSALNPIIY. At 405–508 the chain is on the cytoplasmic side; sequence AYFNRDFRAA…MQQLHPLYTN (104 aa). The segment at 440–464 is disordered; that stretch reads RDLEFGGPSRRGTNGAQRTGSGSAE. Over residues 450–461 the composition is skewed to polar residues; it reads RGTNGAQRTGSG.

It belongs to the G-protein coupled receptor 1 family. As to expression, in the adult, expressed in the superior protocerebrum and the optic lobe medulla of the central nervous system, nurse cells of egg chambers in the ovary at oogenic stages 1-10, and spermatogonia and spermatocytes in the testis. Expressed in embryonic and larval ventral nerve cord and brain lobe, and the larval imaginal disk and larval salivary gland. Also expressed in larval synaptic boutons and retinal cells in the optic disk.

The protein localises to the cell membrane. In terms of biological role, autoreceptor for octopamine, which is a neurotransmitter, neurohormone, and neuromodulator in invertebrates. Negatively regulates synaptic growth by activating the inhibitory G protein Galphao and limiting cAMP production. Antagonizes the action of Octbeta2R which stimulates synaptic growth. The chain is Octopamine receptor beta-1R from Drosophila melanogaster (Fruit fly).